A 20-amino-acid polypeptide reads, in one-letter code: Cytochrome c oxidase subunit 7B-heart, mitochondrial (20 aa).

This sequence belongs to the cytochrome c oxidase VIIb family. In terms of assembly, component of the cytochrome c oxidase (complex IV, CIV), a multisubunit enzyme composed of 14 subunits. The complex is composed of a catalytic core of 3 subunits MT-CO1, MT-CO2 and MT-CO3, encoded in the mitochondrial DNA, and 11 supernumerary subunits COX4I, COX5A, COX5B, COX6A, COX6B, COX6C, COX7A, COX7B, COX7C, COX8 and NDUFA4, which are encoded in the nuclear genome. The complex exists as a monomer or a dimer and forms supercomplexes (SCs) in the inner mitochondrial membrane with NADH-ubiquinone oxidoreductase (complex I, CI) and ubiquinol-cytochrome c oxidoreductase (cytochrome b-c1 complex, complex III, CIII), resulting in different assemblies (supercomplex SCI(1)III(2)IV(1) and megacomplex MCI(2)III(2)IV(2)).

The protein localises to the mitochondrion inner membrane. The catalysed reaction is 4 Fe(II)-[cytochrome c] + O2 + 8 H(+)(in) = 4 Fe(III)-[cytochrome c] + 2 H2O + 4 H(+)(out). It participates in energy metabolism; oxidative phosphorylation. Its function is as follows. Component of the cytochrome c oxidase, the last enzyme in the mitochondrial electron transport chain which drives oxidative phosphorylation. The respiratory chain contains 3 multisubunit complexes succinate dehydrogenase (complex II, CII), ubiquinol-cytochrome c oxidoreductase (cytochrome b-c1 complex, complex III, CIII) and cytochrome c oxidase (complex IV, CIV), that cooperate to transfer electrons derived from NADH and succinate to molecular oxygen, creating an electrochemical gradient over the inner membrane that drives transmembrane transport and the ATP synthase. Cytochrome c oxidase is the component of the respiratory chain that catalyzes the reduction of oxygen to water. Electrons originating from reduced cytochrome c in the intermembrane space (IMS) are transferred via the dinuclear copper A center (CU(A)) of subunit 2 and heme A of subunit 1 to the active site in subunit 1, a binuclear center (BNC) formed by heme A3 and copper B (CU(B)). The BNC reduces molecular oxygen to 2 water molecules using 4 electrons from cytochrome c in the IMS and 4 protons from the mitochondrial matrix. This chain is Cytochrome c oxidase subunit 7B-heart, mitochondrial, found in Thunnus obesus (Bigeye tuna).